Reading from the N-terminus, the 48-residue chain is Large ribosomal subunit protein bL33A (48 aa).

This sequence belongs to the bacterial ribosomal protein bL33 family.

The sequence is that of Large ribosomal subunit protein bL33A from Bacillus anthracis.